The chain runs to 872 residues: Valine--tRNA ligase (872 aa).

Residues 49 to 59 carry the 'HIGH' region motif; the sequence is PNVTGILHIGH. The 'KMSKS' region signature appears at 531–535; the sequence is KMSKS. An ATP-binding site is contributed by Lys-534. Residues 810-871 adopt a coiled-coil conformation; it reads PLIARLKKQL…IQQELDLLEQ (62 aa).

The protein belongs to the class-I aminoacyl-tRNA synthetase family. ValS type 1 subfamily. In terms of assembly, monomer.

It localises to the cytoplasm. The catalysed reaction is tRNA(Val) + L-valine + ATP = L-valyl-tRNA(Val) + AMP + diphosphate. Catalyzes the attachment of valine to tRNA(Val). As ValRS can inadvertently accommodate and process structurally similar amino acids such as threonine, to avoid such errors, it has a 'posttransfer' editing activity that hydrolyzes mischarged Thr-tRNA(Val) in a tRNA-dependent manner. The polypeptide is Valine--tRNA ligase (Helicobacter pylori (strain J99 / ATCC 700824) (Campylobacter pylori J99)).